The sequence spans 116 residues: Iron-sulfur cluster insertion protein ErpA (116 aa).

Cys44, Cys108, and Cys110 together coordinate iron-sulfur cluster.

The protein belongs to the HesB/IscA family. In terms of assembly, homodimer. It depends on iron-sulfur cluster as a cofactor.

Functionally, required for insertion of 4Fe-4S clusters for at least IspG. In Pseudomonas fluorescens (strain Pf0-1), this protein is Iron-sulfur cluster insertion protein ErpA.